An 89-amino-acid chain; its full sequence is Small ribosomal subunit protein bS18 (89 aa).

Belongs to the bacterial ribosomal protein bS18 family. As to quaternary structure, part of the 30S ribosomal subunit. Forms a tight heterodimer with protein bS6.

Functionally, binds as a heterodimer with protein bS6 to the central domain of the 16S rRNA, where it helps stabilize the platform of the 30S subunit. This chain is Small ribosomal subunit protein bS18, found in Treponema denticola (strain ATCC 35405 / DSM 14222 / CIP 103919 / JCM 8153 / KCTC 15104).